The sequence spans 154 residues: Large ribosomal subunit protein eL24 (154 aa).

Residues Ala92–Arg154 form a disordered region. Over residues Gln96 to Gly122 the composition is skewed to basic and acidic residues. A compositionally biased stretch (low complexity) spans Lys129–Arg154.

It belongs to the eukaryotic ribosomal protein eL24 family.

This is Large ribosomal subunit protein eL24 (RPL24) from Branchiostoma belcheri (Amphioxus).